The chain runs to 196 residues: Vascular-related unknown protein 2 (196 aa).

The tract at residues 84–130 (ANNINTNPKKRRIIHQHKEEEEEELQKGEEEEEDEEDTASSPSNKTK) is disordered. Residues 103–121 (EEEEELQKGEEEEEDEEDT) are compositionally biased toward acidic residues.

Functionally, involved in the regulation of plant growth. The protein is Vascular-related unknown protein 2 of Arabidopsis thaliana (Mouse-ear cress).